The chain runs to 291 residues: Ribosomal RNA small subunit methyltransferase H (291 aa).

S-adenosyl-L-methionine-binding positions include 36-38, aspartate 55, leucine 88, aspartate 102, and glutamine 109; that span reads GGH. The interval 268–291 is disordered; it reads KPTQEETKNNPRARSAKLRVAERI.

Belongs to the methyltransferase superfamily. RsmH family.

It is found in the cytoplasm. The catalysed reaction is cytidine(1402) in 16S rRNA + S-adenosyl-L-methionine = N(4)-methylcytidine(1402) in 16S rRNA + S-adenosyl-L-homocysteine + H(+). Functionally, specifically methylates the N4 position of cytidine in position 1402 (C1402) of 16S rRNA. The protein is Ribosomal RNA small subunit methyltransferase H of Thermosipho melanesiensis (strain DSM 12029 / CIP 104789 / BI429).